A 293-amino-acid chain; its full sequence is Ribosomal RNA small subunit methyltransferase A (293 aa).

S-adenosyl-L-methionine contacts are provided by N29, L31, G56, E77, D102, and N127.

The protein belongs to the class I-like SAM-binding methyltransferase superfamily. rRNA adenine N(6)-methyltransferase family. RsmA subfamily.

It localises to the cytoplasm. The catalysed reaction is adenosine(1518)/adenosine(1519) in 16S rRNA + 4 S-adenosyl-L-methionine = N(6)-dimethyladenosine(1518)/N(6)-dimethyladenosine(1519) in 16S rRNA + 4 S-adenosyl-L-homocysteine + 4 H(+). Specifically dimethylates two adjacent adenosines (A1518 and A1519) in the loop of a conserved hairpin near the 3'-end of 16S rRNA in the 30S particle. May play a critical role in biogenesis of 30S subunits. This Geobacillus kaustophilus (strain HTA426) protein is Ribosomal RNA small subunit methyltransferase A.